The sequence spans 140 residues: Protein BIC1 (140 aa).

The span at 1-10 (MMNIDDTTSP) shows a compositional bias: polar residues. The segment at 1 to 71 (MMNIDDTTSP…RVDTGRERLK (71 aa)) is disordered. Over residues 42–68 (ADKKDLALLEEKPKQSQEEDRVDTGRE) the composition is skewed to basic and acidic residues.

As to quaternary structure, interacts with CRY2 in both darkness and light.

The protein localises to the nucleus. Regulates the blue-light dependent dimerization of CRY2 and formation of photobodies. Interacts with photoexited CRY2 to inhibit its activity. Inhibits CRY phosphorylation. The polypeptide is Protein BIC1 (Arabidopsis thaliana (Mouse-ear cress)).